A 1334-amino-acid polypeptide reads, in one-letter code: DNA-directed RNA polymerase subunit beta' (1334 aa).

Residues Cys213, Cys284, Cys291, and Cys294 each contribute to the Zn(2+) site. Residues 1299–1308 (SSRGSSRFSR) show a composition bias toward low complexity. A disordered region spans residues 1299 to 1334 (SSRGSSRFSRQPISDRWSEADEEGEEDDFEEDYEEE). Positions 1318 to 1334 (ADEEGEEDDFEEDYEEE) are enriched in acidic residues.

It belongs to the RNA polymerase beta' chain family. RpoC2 subfamily. In cyanobacteria the RNAP catalytic core is composed of 2 alpha, 1 beta, 1 beta', 1 gamma and 1 omega subunit. When a sigma factor is associated with the core the holoenzyme is formed, which can initiate transcription. Zn(2+) is required as a cofactor.

The catalysed reaction is RNA(n) + a ribonucleoside 5'-triphosphate = RNA(n+1) + diphosphate. Its function is as follows. DNA-dependent RNA polymerase catalyzes the transcription of DNA into RNA using the four ribonucleoside triphosphates as substrates. The protein is DNA-directed RNA polymerase subunit beta' of Microcystis aeruginosa (strain NIES-843 / IAM M-2473).